Consider the following 343-residue polypeptide: Follistatin (343 aa).

The N-terminal stretch at 1-28 is a signal peptide; it reads MLNQRIHPGMLVLLMFLYHFMEDHTAQA. Residues 29–102 enclose the TB domain; it reads GNCWLRQARN…TCENVDCGPG (74 aa). Cystine bridges form between Cys-31–Cys-54, Cys-41–Cys-87, Cys-55–Cys-90, Cys-94–Cys-105, Cys-99–Cys-115, Cys-117–Cys-149, Cys-121–Cys-142, and Cys-131–Cys-163. Residues 93–116 enclose the Follistatin-like 1 domain; sequence TCENVDCGPGKKCKMNKKNKPRCV. Kazal-like domains lie at 99 to 165, 185 to 240, and 263 to 317; these read CGPG…KCKK, NAYC…KCIK, and RGRC…SCNS. A glycan (N-linked (GlcNAc...) asparagine) is linked at Asn-123. Residues 166-189 form the Follistatin-like 2 domain; that stretch reads TCRDVLCPGSSTCVVDQTNNAYCV. 3 disulfide bridges follow: Cys-191/Cys-224, Cys-195/Cys-217, and Cys-206/Cys-238. A Follistatin-like 3 domain is found at 243–267; that stretch reads SCEDIQCSAGKKCLWDFKVGRGRCA. Intrachain disulfides connect Cys-269/Cys-301, Cys-273/Cys-294, and Cys-283/Cys-315. Asn-287 carries an N-linked (GlcNAc...) asparagine glycan. Positions 315 to 343 are disordered; the sequence is CNSINEDPEEEEEDEDQDYSFPISSILEW. The span at 320 to 332 shows a compositional bias: acidic residues; the sequence is EDPEEEEEDEDQD.

Monomer. As to expression, ciliary ganglion neurons. Levels are higher in the iris than the choroid.

It localises to the secreted. Functionally, binds directly to activin and functions as an activin antagonist. Inhibits activin A signaling in the iris and regulates somatostatin phenotype in ciliary ganglion neurons. Specific inhibitor of the biosynthesis and secretion of pituitary follicle stimulating hormone (FSH). The chain is Follistatin (FST) from Gallus gallus (Chicken).